A 238-amino-acid polypeptide reads, in one-letter code: Ribonuclease PH (238 aa).

Residues Arg-86 and 124 to 126 each bind phosphate; that span reads GTR.

This sequence belongs to the RNase PH family. In terms of assembly, homohexameric ring arranged as a trimer of dimers.

It carries out the reaction tRNA(n+1) + phosphate = tRNA(n) + a ribonucleoside 5'-diphosphate. In terms of biological role, phosphorolytic 3'-5' exoribonuclease that plays an important role in tRNA 3'-end maturation. Removes nucleotide residues following the 3'-CCA terminus of tRNAs; can also add nucleotides to the ends of RNA molecules by using nucleoside diphosphates as substrates, but this may not be physiologically important. Probably plays a role in initiation of 16S rRNA degradation (leading to ribosome degradation) during starvation. The polypeptide is Ribonuclease PH (Yersinia enterocolitica serotype O:8 / biotype 1B (strain NCTC 13174 / 8081)).